Here is a 443-residue protein sequence, read N- to C-terminus: Glutamate--tRNA ligase 1 (443 aa).

The short motif at proline 10 to asparagine 20 is the 'HIGH' region element. The 'KMSKS' region signature appears at alanine 241–arginine 245. Lysine 244 is an ATP binding site.

This sequence belongs to the class-I aminoacyl-tRNA synthetase family. Glutamate--tRNA ligase type 1 subfamily. Monomer.

The protein resides in the cytoplasm. The catalysed reaction is tRNA(Glu) + L-glutamate + ATP = L-glutamyl-tRNA(Glu) + AMP + diphosphate. Its function is as follows. Catalyzes the attachment of glutamate to tRNA(Glu) in a two-step reaction: glutamate is first activated by ATP to form Glu-AMP and then transferred to the acceptor end of tRNA(Glu). The polypeptide is Glutamate--tRNA ligase 1 (Ruegeria pomeroyi (strain ATCC 700808 / DSM 15171 / DSS-3) (Silicibacter pomeroyi)).